A 337-amino-acid chain; its full sequence is tRNA N6-adenosine threonylcarbamoyltransferase (337 aa).

Histidine 110 and histidine 114 together coordinate Fe cation. Residues 133 to 137 (LVSGK), aspartate 166, glycine 179, and asparagine 271 contribute to the substrate site. Residue aspartate 300 coordinates Fe cation.

Belongs to the KAE1 / TsaD family. The cofactor is Fe(2+).

It localises to the cytoplasm. It carries out the reaction L-threonylcarbamoyladenylate + adenosine(37) in tRNA = N(6)-L-threonylcarbamoyladenosine(37) in tRNA + AMP + H(+). Functionally, required for the formation of a threonylcarbamoyl group on adenosine at position 37 (t(6)A37) in tRNAs that read codons beginning with adenine. Is involved in the transfer of the threonylcarbamoyl moiety of threonylcarbamoyl-AMP (TC-AMP) to the N6 group of A37, together with TsaE and TsaB. TsaD likely plays a direct catalytic role in this reaction. The chain is tRNA N6-adenosine threonylcarbamoyltransferase from Buchnera aphidicola subsp. Schizaphis graminum (strain Sg).